The chain runs to 178 residues: Large ribosomal subunit protein uL6 (178 aa).

It belongs to the universal ribosomal protein uL6 family. Part of the 50S ribosomal subunit.

Functionally, this protein binds to the 23S rRNA, and is important in its secondary structure. It is located near the subunit interface in the base of the L7/L12 stalk, and near the tRNA binding site of the peptidyltransferase center. This is Large ribosomal subunit protein uL6 from Campylobacter jejuni subsp. doylei (strain ATCC BAA-1458 / RM4099 / 269.97).